Consider the following 590-residue polypeptide: Phosphomethylpyrimidine synthase (590 aa).

Substrate is bound by residues N197, M226, Y255, H291, 311–313 (SRG), 352–355 (DGLR), and E391. Residue H395 coordinates Zn(2+). Residue Y418 coordinates substrate. H459 contributes to the Zn(2+) binding site. [4Fe-4S] cluster-binding residues include C539, C542, and C547.

The protein belongs to the ThiC family. [4Fe-4S] cluster is required as a cofactor.

The enzyme catalyses 5-amino-1-(5-phospho-beta-D-ribosyl)imidazole + S-adenosyl-L-methionine = 4-amino-2-methyl-5-(phosphooxymethyl)pyrimidine + CO + 5'-deoxyadenosine + formate + L-methionine + 3 H(+). The protein operates within cofactor biosynthesis; thiamine diphosphate biosynthesis. In terms of biological role, catalyzes the synthesis of the hydroxymethylpyrimidine phosphate (HMP-P) moiety of thiamine from aminoimidazole ribotide (AIR) in a radical S-adenosyl-L-methionine (SAM)-dependent reaction. The chain is Phosphomethylpyrimidine synthase from Bacillus subtilis (strain 168).